We begin with the raw amino-acid sequence, 372 residues long: tRNA-specific 2-thiouridylase MnmA (372 aa).

Residues 16–23 (GMSGGVDS) and Met-42 each bind ATP. Residues 102-104 (NPD) are interaction with target base in tRNA. Catalysis depends on Cys-107, which acts as the Nucleophile. Cys-107 and Cys-205 are disulfide-bonded. ATP is bound at residue Gly-132. Residues 155 to 157 (KDQ) are interaction with tRNA. The Cysteine persulfide intermediate role is filled by Cys-205. Residues 317-318 (RY) are interaction with tRNA.

The protein belongs to the MnmA/TRMU family.

The protein localises to the cytoplasm. It catalyses the reaction S-sulfanyl-L-cysteinyl-[protein] + uridine(34) in tRNA + AH2 + ATP = 2-thiouridine(34) in tRNA + L-cysteinyl-[protein] + A + AMP + diphosphate + H(+). Catalyzes the 2-thiolation of uridine at the wobble position (U34) of tRNA, leading to the formation of s(2)U34. This Shewanella oneidensis (strain ATCC 700550 / JCM 31522 / CIP 106686 / LMG 19005 / NCIMB 14063 / MR-1) protein is tRNA-specific 2-thiouridylase MnmA.